The primary structure comprises 155 residues: Aspartate carbamoyltransferase regulatory chain (155 aa).

Positions 113, 118, 139, and 142 each coordinate Zn(2+).

This sequence belongs to the PyrI family. In terms of assembly, contains catalytic and regulatory chains. Requires Zn(2+) as cofactor.

Its function is as follows. Involved in allosteric regulation of aspartate carbamoyltransferase. In Methanoculleus marisnigri (strain ATCC 35101 / DSM 1498 / JR1), this protein is Aspartate carbamoyltransferase regulatory chain.